Reading from the N-terminus, the 99-residue chain is Malonate decarboxylase acyl carrier protein (99 aa).

Ser25 carries the O-(phosphoribosyl dephospho-coenzyme A)serine modification.

Belongs to the MdcC family. Post-translationally, covalently binds the prosthetic group of malonate decarboxylase.

The protein resides in the cytoplasm. Its function is as follows. Subunit of malonate decarboxylase, it is an acyl carrier protein to which acetyl and malonyl thioester residues are bound via a 2'-(5''-phosphoribosyl)-3'-dephospho-CoA prosthetic group and turn over during the catalytic mechanism. This chain is Malonate decarboxylase acyl carrier protein, found in Pseudomonas fluorescens (strain SBW25).